Here is a 505-residue protein sequence, read N- to C-terminus: Peroxisome proliferator-activated receptor gamma (505 aa).

The O-linked (GlcNAc) threonine glycan is linked to threonine 84. Serine 112 is modified (phosphoserine; by MAPK). Positions 136 to 210 (AIECRVCGDK…VGMSHNAIRF (75 aa)) form a DNA-binding region, nuclear receptor. 2 NR C4-type zinc fingers span residues 139–159 (CRVCGDKASGFHYGVHACEGC) and 176–198 (CDLNCRIHKKSRNKCQYCRFQKC). Positions 205–280 (HNAIRFGRMP…DKSPFVIYDM (76 aa)) are interaction with FAM120B. An NR LBD domain is found at 238–503 (DLRALAKHLY…HPLLQEIYKD (266 aa)). Lysine 252 is covalently cross-linked (Glycyl lysine isopeptide (Lys-Gly) (interchain with G-Cter in ubiquitin)). A 9aaTAD motif is present at residues 495 to 503 (PLLQEIYKD).

Belongs to the nuclear hormone receptor family. NR1 subfamily. Interacts with FOXO1 (acetylated form). Heterodimer with other nuclear receptors, such as RXRA. The heterodimer with the retinoic acid receptor RXRA is called adipocyte-specific transcription factor ARF6. Interacts with NCOA6 coactivator, leading to a strong increase in transcription of target genes. Interacts with coactivator PPARBP, leading to a mild increase in transcription of target genes. Interacts with NOCA7 in a ligand-inducible manner. Interacts with NCOA1 and NCOA2 LXXLL motifs. Interacts with ASXL1, ASXL2, DNTTIP2, FAM120B, MAP2K1/MEK1, NR0B2, PDPK1, PRDM16, PRMT2 and TGFB1I1. Interacts (when activated by agonist) with PPP5C. Interacts with HELZ2 and THRAP3; the interaction stimulates the transcriptional activity of PPARG. Interacts with PER2, the interaction is ligand dependent and blocks PPARG recruitment to target promoters. Interacts with NOCT. Interacts with ACTN4. Interacts (when in the liganded conformation) with GPS2. Interacts with CRY1 and CRY2 in a ligand-dependent manner. In the absence of hormonal ligand, interacts with TACC1. In macrophages, interacts with PAQR3 and STUB1; the interactions promote PPARG poylubiquitination and STUB1-mediated degradation. In terms of processing, phosphorylated by MAPK. The phosphorylation inhibits PPAR gamma activity. Post-translationally, O-GlcNAcylation at Thr-84 reduces transcriptional activity in adipocytes. Phosphorylated at basal conditions and dephosphorylated when treated with the ligand. May be dephosphorylated by PPP5C. The phosphorylated form may be inactive and dephosphorylation at induces adipogenic activity. In terms of processing, ubiquitinated by E3 ubiquitin-protein ligase complex containing FBXO9; leading to proteasomal degradation. Ubiquitinated at Lys-252 by TRIM55 leading to proteasomal degradation. Ubiquitinated by E3 ubiquitin-protein ligase STUB1/CHIP; leading to proteasomal degradation. Highest expression in adipose tissue.

The protein localises to the nucleus. The protein resides in the cytoplasm. PDPK1 activates its transcriptional activity independently of its kinase activity. Its function is as follows. Nuclear receptor that binds peroxisome proliferators such as hypolipidemic drugs and fatty acids. Once activated by a ligand, the nuclear receptor binds to DNA specific PPAR response elements (PPRE) and modulates the transcription of its target genes, such as acyl-CoA oxidase. It therefore controls the peroxisomal beta-oxidation pathway of fatty acids. Key regulator of adipocyte differentiation and glucose homeostasis. ARF6 acts as a key regulator of the tissue-specific adipocyte P2 (aP2) enhancer. Acts as a critical regulator of gut homeostasis by suppressing NF-kappa-B-mediated pro-inflammatory responses. Plays a role in the regulation of cardiovascular circadian rhythms by regulating the transcription of BMAL1 in the blood vessels. The polypeptide is Peroxisome proliferator-activated receptor gamma (Pparg) (Rattus norvegicus (Rat)).